The following is a 128-amino-acid chain: Small ribosomal subunit protein uS14m (128 aa).

This sequence belongs to the universal ribosomal protein uS14 family. Component of the mitochondrial small ribosomal subunit (mt-SSU). Mature mammalian 55S mitochondrial ribosomes consist of a small (28S) and a large (39S) subunit. The 28S small subunit contains a 12S ribosomal RNA (12S mt-rRNA) and 30 different proteins. The 39S large subunit contains a 16S rRNA (16S mt-rRNA), a copy of mitochondrial valine transfer RNA (mt-tRNA(Val)), which plays an integral structural role, and 52 different proteins. Interacts with LIAT1.

The protein resides in the mitochondrion. In Homo sapiens (Human), this protein is Small ribosomal subunit protein uS14m.